The sequence spans 340 residues: Alcohol dehydrogenase patD (340 aa).

C46 is a binding site for Zn(2+). H47 contacts NAD(+). 6 residues coordinate Zn(2+): H67, E68, C101, C104, C112, and C154. H67 provides a ligand contact to substrate. NAD(+) contacts are provided by residues 178-183 (GLGGLG), 198-203 (VALSRD), K206, 265-267 (LSI), 289-291 (PSG), and 297-299 (EDA).

Belongs to the zinc-containing alcohol dehydrogenase family. Zn(2+) serves as cofactor.

Its subcellular location is the cytoplasm. The protein localises to the cytosol. The catalysed reaction is neopatulin + NADPH + H(+) = (E)-ascladiol + NADP(+). Its pathway is mycotoxin biosynthesis; patulin biosynthesis. Alcohol dehydrogenase; part of the gene cluster that mediates the biosynthesis of patulin, an acetate-derived tetraketide mycotoxin produced by several fungal species that shows antimicrobial properties against several bacteria. PatD catalyzes the conversion of neopatulin into E-ascladiol. The pathway begins with the synthesis of 6-methylsalicylic acid by the polyketide synthase (PKS) patK via condensation of acetate and malonate units. The 6-methylsalicylic acid decarboxylase patG then catalyzes the decarboxylation of 6-methylsalicylic acid to yield m-cresol (also known as 3-methylphenol). These first reactions occur in the cytosol. The intermediate m-cresol is then transported into the endoplasmic reticulum where the cytochrome P450 monooxygenase patH converts it to m-hydroxybenzyl alcohol, which is further converted to gentisyl alcohol by the cytochrome P450 monooxygenase patI. The oxidoreductases patJ and patO further convert gentisyl alcohol to isoepoxydon in the vacuole. PatN catalyzes then the transformation of isoepoxydon into phyllostine. The cluster protein patF is responsible for the conversion from phyllostine to neopatulin whereas the alcohol dehydrogenase patD converts neopatulin to E-ascladiol. The steps between isoepoxydon and E-ascladiol occur in the cytosol, and E-ascladiol is probably secreted to the extracellular space by one of the cluster-specific transporters patC or patM. Finally, the secreted patulin synthase patE catalyzes the conversion of E-ascladiol to patulin. This Penicillium expansum (Blue mold rot fungus) protein is Alcohol dehydrogenase patD.